A 382-amino-acid polypeptide reads, in one-letter code: ATP phosphoribosyltransferase regulatory subunit (382 aa).

It belongs to the class-II aminoacyl-tRNA synthetase family. HisZ subfamily. In terms of assembly, heteromultimer composed of HisG and HisZ subunits.

Its subcellular location is the cytoplasm. It participates in amino-acid biosynthesis; L-histidine biosynthesis; L-histidine from 5-phospho-alpha-D-ribose 1-diphosphate: step 1/9. Its function is as follows. Required for the first step of histidine biosynthesis. May allow the feedback regulation of ATP phosphoribosyltransferase activity by histidine. The sequence is that of ATP phosphoribosyltransferase regulatory subunit from Burkholderia multivorans (strain ATCC 17616 / 249).